A 277-amino-acid polypeptide reads, in one-letter code: Formamidopyrimidine-DNA glycosylase (277 aa).

Proline 2 acts as the Schiff-base intermediate with DNA in catalysis. Glutamate 3 serves as the catalytic Proton donor. Residue lysine 60 is the Proton donor; for beta-elimination activity of the active site. Residues histidine 94, arginine 113, and arginine 158 each contribute to the DNA site. An FPG-type zinc finger spans residues 243–277; that stretch reads WVYNRAGEPCKVCGDVIQRIKLGGRSSHFCRQCQV. Arginine 267 serves as the catalytic Proton donor; for delta-elimination activity.

It belongs to the FPG family. In terms of assembly, monomer. The cofactor is Zn(2+).

It carries out the reaction Hydrolysis of DNA containing ring-opened 7-methylguanine residues, releasing 2,6-diamino-4-hydroxy-5-(N-methyl)formamidopyrimidine.. The catalysed reaction is 2'-deoxyribonucleotide-(2'-deoxyribose 5'-phosphate)-2'-deoxyribonucleotide-DNA = a 3'-end 2'-deoxyribonucleotide-(2,3-dehydro-2,3-deoxyribose 5'-phosphate)-DNA + a 5'-end 5'-phospho-2'-deoxyribonucleoside-DNA + H(+). Its function is as follows. Involved in base excision repair of DNA damaged by oxidation or by mutagenic agents. Acts as a DNA glycosylase that recognizes and removes damaged bases. Has a preference for oxidized purines, such as 7,8-dihydro-8-oxoguanine (8-oxoG). Has AP (apurinic/apyrimidinic) lyase activity and introduces nicks in the DNA strand. Cleaves the DNA backbone by beta-delta elimination to generate a single-strand break at the site of the removed base with both 3'- and 5'-phosphates. This chain is Formamidopyrimidine-DNA glycosylase, found in Trichormus variabilis (strain ATCC 29413 / PCC 7937) (Anabaena variabilis).